The primary structure comprises 212 residues: Methylthioribulose-1-phosphate dehydratase (212 aa).

Zn(2+)-binding residues include H98 and H100.

Belongs to the aldolase class II family. MtnB subfamily. Zn(2+) serves as cofactor.

The enzyme catalyses 5-(methylsulfanyl)-D-ribulose 1-phosphate = 5-methylsulfanyl-2,3-dioxopentyl phosphate + H2O. It participates in amino-acid biosynthesis; L-methionine biosynthesis via salvage pathway; L-methionine from S-methyl-5-thio-alpha-D-ribose 1-phosphate: step 2/6. In terms of biological role, catalyzes the dehydration of methylthioribulose-1-phosphate (MTRu-1-P) into 2,3-diketo-5-methylthiopentyl-1-phosphate (DK-MTP-1-P). This Picosynechococcus sp. (strain ATCC 27264 / PCC 7002 / PR-6) (Agmenellum quadruplicatum) protein is Methylthioribulose-1-phosphate dehydratase.